A 272-amino-acid polypeptide reads, in one-letter code: Putative hydro-lyase RPD_1846 (272 aa).

Belongs to the D-glutamate cyclase family.

In Rhodopseudomonas palustris (strain BisB5), this protein is Putative hydro-lyase RPD_1846.